The chain runs to 229 residues: Ribose-5-phosphate isomerase A (229 aa).

Residues Thr28–Thr31, Asp84–Asp87, and Lys97–Gly100 contribute to the substrate site. The Proton acceptor role is filled by Glu106. Lys124 is a substrate binding site.

Belongs to the ribose 5-phosphate isomerase family. As to quaternary structure, homodimer.

The catalysed reaction is aldehydo-D-ribose 5-phosphate = D-ribulose 5-phosphate. It functions in the pathway carbohydrate degradation; pentose phosphate pathway; D-ribose 5-phosphate from D-ribulose 5-phosphate (non-oxidative stage): step 1/1. Catalyzes the reversible conversion of ribose-5-phosphate to ribulose 5-phosphate. This Lacticaseibacillus paracasei (strain ATCC 334 / BCRC 17002 / CCUG 31169 / CIP 107868 / KCTC 3260 / NRRL B-441) (Lactobacillus paracasei) protein is Ribose-5-phosphate isomerase A.